The sequence spans 226 residues: LIM domain-containing protein PLIM2a (226 aa).

LIM zinc-binding domains follow at residues Asp8–Glu68 and Asp104–Glu164. Positions Gln173 to Ser226 are disordered. The span at Ser191–Asp209 shows a compositional bias: basic and acidic residues. The segment covering Ala210 to Ser226 has biased composition (acidic residues).

In terms of assembly, interacts with F-actin. As to expression, predominantly expressed in flowers, in the tapetum and in pollen grains. Detected in leaves and stems.

It localises to the cytoplasm. The protein resides in the cytoskeleton. Binds to actin filaments and promotes cross-linking into thick bundles. Has an actin-stabilizing activity. The actin regulatory activities are inhibited by pH &gt; 6.8 but are [Ca(2+)] independent. This Arabidopsis thaliana (Mouse-ear cress) protein is LIM domain-containing protein PLIM2a.